The sequence spans 222 residues: UPF0502 protein PBPRB0676 (222 aa).

It belongs to the UPF0502 family.

The sequence is that of UPF0502 protein PBPRB0676 from Photobacterium profundum (strain SS9).